The chain runs to 1650 residues: MATSLTSQLENLRTSAARHLTVEKRHVSLLFDRKEANKLSNETAHRIGVAGLEQMKRIDPVFDTEFANDLFSEERVDFVRSMLEKGANEELNKQIEKLLLELSPYLQHFACQQVLEFLIHTYQIYSFNAETLLLTFLPFHETKVYSRLLRILDFDWKRSKEWQFMQQFTKTETPIPFTSIARATLSSKHSIITCITDHIRHAVEIVGSDYLEIKHPILFNFHAKLLLSMFTDPEKVDEMMLAKLMPFIENGIKSPMKSFRYSAMVVISQLVLTVKLKDEVLNSMCKLLITKMRSDTAAASLSTLMVVFQQQNVQSLSKNTLKKLLRHEEGIDVWKILKELSERTDTTKFFNVLWKELIVLSKDAESEDNTLAIDVLIETIEDASILTGDQAGTILKLILQEGMDGNIFDNKKKLKSNIRAIGMRFAKQFDAIHAELKAKDKKTLKNVLKEYQIEDIVQFASEAVAATQSEESIEIISEEAPSSKKIKLTASEKAQKLAQSSEFAKREVFSGDPINKATEWLNGEKWDKVEWALNEMAQRGEKYFSRKVEDDVEQFVLEIVKVVGVGGVKQIDGGSVKAALAGANLNPQFVADLLTKFDGVSEIAPKRTKGAQKKNLVEKTFGTEESWEAFNQRVVFVLDLLNARQIIPSSEKVLAALFAVVKQVNSKSDVESSSYQQHLAVNAIRKILEHPEKTKIGASEVDMDCVIETMRSTHNHHLLRDCLRLIVAAAKHTPNSVVKHVMSVFTFMGNGMLRKDNELTLSIVEKTVESLFSTIINSSGQAVLTKQQQTEKLIELARLFAASAIDIPAHRRARIAQAIARAVQAENASTVVLVLVSSFCARWQRSSDAAAQEAMKRGSDQDAYDDLAIELLSALNPFEQLSSVLEMCEYVRRLGGDKPAKSTTTKKDLDTMIFDRTAQTLPRIRHFRYVVVTLISRIFSNRVLIERLAAYDDEELLKNALPLGKRLIECSVELDEFANKEANDQDGSDPQAQRYWVAFASRTEVVSEKLRHLLPGGVAARLIADVLQECVNDKKMSYKMCEKVLQLANIKLGHDRYLFADSGINEKELITLAQALNKFIVAETKSEEKMRMCQNSAYTLKLIAKNLPSQSESLVLADTMQRCVSIVSQYQKLDENLTGNVLLLAGELIRSHNMRSTIHHATSLLKTCLATVQECIARFSKPQYDSAASPGSSVAGGRGNRGHRIRQQSLGGNKFGSDTLLICSLTCIQRVYDQFASFVVESTGDVIIRYCRLIARFGDPSELLALNQPSSSTTAAFQGGSQTSGFGSKTGIHHRLSLIRRSLLSIELRVLPAHIVKTVGELKTEKKALSALFNLLTGYIETQHQQKPEILRKSVIQLRRTFVSDVITPTLIVRSQERQSDQFENVEKLEHTVFNFVISIASILSEVEFRTVVNELVAWAEPGLEAKADLAARLRLVSLLHFANDLYTSFNSLALPYFGRILEISALVLKKCNATLLLGTDELLLSGKRGSIEALETDLALTLAIDVISNAARHRDFFTVDRCQLVSDVIVNELVNTKVEGHEKRCSDHLVPAIYRIGNADPDSFPELLNKIMLKTRDSRAKIRYRALIVLELLIKEIGDGVQPHLSILLPFLNELIEDENKQVEAQCQKVINSLQHKFGETFWSGGSSA.

Positions 1183 to 1210 (QYDSAASPGSSVAGGRGNRGHRIRQQSL) are disordered. The stretch at 1609–1645 (LLPFLNELIEDENKQVEAQCQKVINSLQHKFGETFWS) is one HEAT repeat.

The protein belongs to the HEATR1/UTP10 family.

It localises to the nucleus. Its subcellular location is the nucleolus. Functionally, involved in nucleolar processing of pre-18S ribosomal RNA. Involved in ribosome biosynthesis. This Caenorhabditis elegans protein is HEAT repeat-containing protein 1 homolog (toe-1).